We begin with the raw amino-acid sequence, 84 residues long: Glutaredoxin (84 aa).

The region spanning Met-1–Ala-84 is the Glutaredoxin domain. Residues Cys-12 and Cys-15 are joined by a disulfide bond.

Belongs to the glutaredoxin family. Monomer.

It localises to the cytoplasm. Has a glutathione-disulfide oxidoreductase activity in the presence of NADPH and glutathione reductase. Reduces low molecular weight disulfides and proteins. The chain is Glutaredoxin (grx) from Pseudomonas aeruginosa (strain ATCC 15692 / DSM 22644 / CIP 104116 / JCM 14847 / LMG 12228 / 1C / PRS 101 / PAO1).